A 457-amino-acid chain; its full sequence is Cytochrome b-c1 complex subunit 1, mitochondrial (457 aa).

Residues 1-26 (MLRTVTSKTVSNQFKRSLATAVATPK) constitute a mitochondrion transit peptide.

This sequence belongs to the peptidase M16 family. UQCRC1/QCR1 subfamily. Component of the ubiquinol-cytochrome c oxidoreductase (cytochrome b-c1 complex, complex III, CIII), a multisubunit enzyme composed of 10 subunits. The complex is composed of 3 respiratory subunits cytochrome b (COB), cytochrome c1 (CYT1) and Rieske protein (RIP1), 2 core protein subunits COR1 and QCR2, and 5 low-molecular weight protein subunits QCR6, QCR7, QCR8, QCR9 and QCR10. The complex exists as an obligatory dimer and forms supercomplexes (SCs) in the inner mitochondrial membrane with a monomer or a dimer of cytochrome c oxidase (complex IV, CIV), resulting in 2 different assemblies (supercomplexes III(2)IV and III(2)IV(2)). COR1 interacts with COX5A at the CIII-CIV interface.

Its subcellular location is the mitochondrion inner membrane. Functionally, component of the ubiquinol-cytochrome c oxidoreductase, a multisubunit transmembrane complex that is part of the mitochondrial electron transport chain which drives oxidative phosphorylation. The respiratory chain contains 3 multisubunit complexes succinate dehydrogenase (complex II, CII), ubiquinol-cytochrome c oxidoreductase (cytochrome b-c1 complex, complex III, CIII) and cytochrome c oxidase (complex IV, CIV), that cooperate to transfer electrons derived from NADH and succinate to molecular oxygen, creating an electrochemical gradient over the inner membrane that drives transmembrane transport and the ATP synthase. The cytochrome b-c1 complex catalyzes electron transfer from ubiquinol to cytochrome c, linking this redox reaction to translocation of protons across the mitochondrial inner membrane, with protons being carried across the membrane as hydrogens on the quinol. In the process called Q cycle, 2 protons are consumed from the matrix, 4 protons are released into the intermembrane space and 2 electrons are passed to cytochrome c. The polypeptide is Cytochrome b-c1 complex subunit 1, mitochondrial (COR1) (Saccharomyces cerevisiae (strain ATCC 204508 / S288c) (Baker's yeast)).